Reading from the N-terminus, the 353-residue chain is Methylthioribose-1-phosphate isomerase (353 aa).

Substrate is bound by residues arginine 51–alanine 53, arginine 94, and glutamine 199. Aspartate 240 (proton donor) is an active-site residue. Position 250–251 (asparagine 250–lysine 251) interacts with substrate.

The protein belongs to the eIF-2B alpha/beta/delta subunits family. MtnA subfamily. In terms of assembly, homodimer.

It carries out the reaction 5-(methylsulfanyl)-alpha-D-ribose 1-phosphate = 5-(methylsulfanyl)-D-ribulose 1-phosphate. It participates in amino-acid biosynthesis; L-methionine biosynthesis via salvage pathway; L-methionine from S-methyl-5-thio-alpha-D-ribose 1-phosphate: step 1/6. Catalyzes the interconversion of methylthioribose-1-phosphate (MTR-1-P) into methylthioribulose-1-phosphate (MTRu-1-P). This is Methylthioribose-1-phosphate isomerase from Bacillus velezensis (strain DSM 23117 / BGSC 10A6 / LMG 26770 / FZB42) (Bacillus amyloliquefaciens subsp. plantarum).